A 110-amino-acid polypeptide reads, in one-letter code: Large ribosomal subunit protein uL22 (110 aa).

It belongs to the universal ribosomal protein uL22 family. In terms of assembly, part of the 50S ribosomal subunit.

Its function is as follows. This protein binds specifically to 23S rRNA; its binding is stimulated by other ribosomal proteins, e.g. L4, L17, and L20. It is important during the early stages of 50S assembly. It makes multiple contacts with different domains of the 23S rRNA in the assembled 50S subunit and ribosome. The globular domain of the protein is located near the polypeptide exit tunnel on the outside of the subunit, while an extended beta-hairpin is found that lines the wall of the exit tunnel in the center of the 70S ribosome. The chain is Large ribosomal subunit protein uL22 from Syntrophus aciditrophicus (strain SB).